The following is a 1278-amino-acid chain: Dynactin subunit 1 (1278 aa).

The tract at residues 1 to 25 (MAQSKRHVYSRTPSGSRMSAEASAR) is disordered. In terms of domain architecture, CAP-Gly spans 48 to 90 (GATLFATGKWVGVILDEAKGKNDGTVQGRKYFTCDEGHGIFVR). A disordered region spans residues 100–223 (GADTTSPETP…SKEEEGLRAQ (124 aa)). The segment covering 102–114 (DTTSPETPDSSAS) has biased composition (polar residues). T108 carries the post-translational modification Phosphothreonine. A compositionally biased stretch (basic residues) spans 129-152 (SKLRGLKPKKAPTARKTTTRRPKP). Residues T145, T146, and T147 each carry the phosphothreonine; by SLK modification. The segment covering 161 to 184 (AGASSSLGPSGSASAGELSSSEPS) has biased composition (low complexity). S179 carries the phosphoserine; by PLK1 modification. S212 bears the Phosphoserine; by CDK1 mark. Coiled-coil stretches lie at residues 213–547 (PSKE…RQQQ), 943–1049 (LKLE…EGLR), and 1182–1211 (SAQLMEQVAQLKSLSDTVEKLKDEVLKETV). Residues 214–223 (SKEEEGLRAQ) show a composition bias toward basic and acidic residues. The tract at residues 911–1278 (EYDAERPPSK…LHQLHSRLIS (368 aa)) is interaction with HPS6.

It belongs to the dynactin 150 kDa subunit family. In terms of assembly, monomer and homodimer. Subunit of dynactin, a multiprotein complex part of a tripartite complex with dynein and a adapter, such as BICDL1, BICD2 or HOOK3. The dynactin complex is built around ACTR1A/ACTB filament and consists of an actin-related filament composed of a shoulder domain, a pointed end and a barbed end. Its length is defined by its flexible shoulder domain. The soulder is composed of 2 DCTN1 subunits, 4 DCTN2 and 2 DCTN3. DCTN1/p150(glued) binds directly to microtubules and to cytoplasmic dynein. The 4 DCNT2 (via N-terminus) bind the ACTR1A filament and act as molecular rulers to determine the length. The pointed end is important for binding dynein-dynactin cargo adapters. Consists of 4 subunits: ACTR10, DCNT4, DCTN5 and DCTN6. The barbed end is composed of a CAPZA1:CAPZB heterodimers, which binds ACTR1A/ACTB filament and dynactin and stabilizes dynactin. Interacts with the C-terminus of MAPRE1, MAPRE2 and MAPRE3. Interacts (via C-terminus) with SNX6. Interacts with CLN3, DYNAP, ECPAS and FBXL5. Interacts with MISP; this interaction regulates its distribution at the cell cortex. Interacts with CEP131. Interacts with CEP126. Interacts with CLIP1. Interacts with dynein intermediate chain and dynein heavy chain. Interacts with PLK1 (via POLO-box domain). Interacts with TBCB. Binds preferentially to tyrosinated microtubules than to detyrosinated microtubules. Interacts with PARD6A. Interacts with HPS6. Interacts with KIF3A. Interacts with BICD2. Interacts with DST (isoform 9). Interacts with DST (isoform 1). Identified in a complex with MREG and RILP. Interacts with BCCIP (isoform 2/alpha). Interacts with DCDC1. Interacts with AKNA. Interacts with DYNC1I2. Interacts with RUFY3 and RUFY4. Post-translationally, ubiquitinated by a SCF complex containing FBXL5, leading to its degradation by the proteasome. In terms of processing, phosphorylation by SLK at Thr-145, Thr-146 and Thr-147 targets DCTN1 to the centrosome. It is uncertain if SLK phosphorylates all three threonines or one or two of them. PLK1-mediated phosphorylation at Ser-179 is essential for its localization in the nuclear envelope, promotes its dissociation from microtubules during early mitosis and positively regulates nuclear envelope breakdown during prophase. Brain.

It localises to the cytoplasm. The protein localises to the cytoskeleton. Its subcellular location is the microtubule organizing center. The protein resides in the centrosome. It is found in the centriole. It localises to the spindle. The protein localises to the nucleus envelope. Its subcellular location is the cell cortex. Functionally, part of the dynactin complex that activates the molecular motor dynein for ultra-processive transport along microtubules. Plays a key role in dynein-mediated retrograde transport of vesicles and organelles along microtubules by recruiting and tethering dynein to microtubules. Binds to both dynein and microtubules providing a link between specific cargos, microtubules and dynein. Essential for targeting dynein to microtubule plus ends, recruiting dynein to membranous cargos and enhancing dynein processivity (the ability to move along a microtubule for a long distance without falling off the track). Can also act as a brake to slow the dynein motor during motility along the microtubule. Can regulate microtubule stability by promoting microtubule formation, nucleation and polymerization and by inhibiting microtubule catastrophe in neurons. Inhibits microtubule catastrophe by binding both to microtubules and to tubulin, leading to enhanced microtubule stability along the axon. Plays a role in metaphase spindle orientation. Plays a role in centriole cohesion and subdistal appendage organization and function. Its recruitment to the centriole in a KIF3A-dependent manner is essential for the maintenance of centriole cohesion and the formation of subdistal appendage. Also required for microtubule anchoring at the mother centriole. Plays a role in primary cilia formation. This Homo sapiens (Human) protein is Dynactin subunit 1.